A 535-amino-acid polypeptide reads, in one-letter code: EH domain-containing protein 3 (535 aa).

Residue Met-1 is modified to N-acetylmethionine. The region spanning 55-286 is the Dynamin-type G domain; sequence FDNKPMVLLV…DLFKDIQSLP (232 aa). The interval 65–72 is G1 motif; that stretch reads GQYSTGKT. 65 to 72 is a binding site for ATP; it reads GQYSTGKT. The interval 91–92 is G2 motif; that stretch reads EP. A G3 motif region spans residues 153 to 156; sequence DTPG. A coiled-coil region spans residues 198–227; it reads DEFSEVIKALKNHEDKMRVVLNKADQIETQ. The G4 motif stretch occupies residues 219-222; it reads NKAD. Position 220 (Lys-220) interacts with ATP. Ile-243 is a region of interest (G5 motif). ATP is bound at residue Trp-258. Lys-315 is covalently cross-linked (Glycyl lysine isopeptide (Lys-Gly) (interchain with G-Cter in SUMO)). A phosphoserine mark is found at Ser-349 and Ser-456. The EH domain maps to 444-532; sequence DKPMYDEIFY…AHLLPPSKRK (89 aa). Residues 476–511 enclose the EF-hand domain; it reads LPNSVLGKIWKLADIDKDGMLDDEEFALANHLIKVK. Ca(2+)-binding residues include Asp-489, Asp-491, Asp-493, Met-495, and Glu-500. A Glycyl lysine isopeptide (Lys-Gly) (interchain with G-Cter in SUMO) cross-link involves residue Lys-511.

This sequence belongs to the TRAFAC class dynamin-like GTPase superfamily. Dynamin/Fzo/YdjA family. EHD subfamily. Homooligomer, and heterooligomer with EHD1, EHD2 and EHD4, ATP-binding is required for heterooligomerization. Interacts with PACSIN1. Interacts with PACSIN2. Interacts (via EH domain) with MICALL1. Interacts (via EH domain) with RAB11FIP2. Interacts with ANK2. Interacts with CACNA1GG and CACNA1H.

It is found in the recycling endosome membrane. Its subcellular location is the cell membrane. It localises to the cell projection. The protein localises to the cilium membrane. Its function is as follows. ATP- and membrane-binding protein that controls membrane reorganization/tubulation upon ATP hydrolysis. In vitro causes tubulation of endocytic membranes. Binding to phosphatidic acid induces its membrane tubulation activity. Plays a role in endocytic transport. Involved in early endosome to recycling endosome compartment (ERC), retrograde early endosome to Golgi, and endosome to plasma membrane (rapid recycling) protein transport. Involved in the regulation of Golgi maintenance and morphology. Involved in the recycling of internalized D1 dopamine receptor. Plays a role in cardiac protein trafficking probably implicating ANK2. Involved in the ventricular membrane targeting of SLC8A1 and CACNA1C and probably the atrial membrane localization of CACNA1GG and CACNA1H implicated in the regulation of atrial myocyte excitability and cardiac conduction. In conjunction with EHD4 may be involved in endocytic trafficking of KDR/VEGFR2 implicated in control of glomerular function. Involved in the rapid recycling of integrin beta-3 implicated in cell adhesion maintenance. Involved in the unidirectional retrograde dendritic transport of endocytosed BACE1 and in efficient sorting of BACE1 to axons implicating a function in neuronal APP processing. Plays a role in the formation of the ciliary vesicle, an early step in cilium biogenesis; possibly sharing redundant functions with Ehd1. The polypeptide is EH domain-containing protein 3 (Rattus norvegicus (Rat)).